Reading from the N-terminus, the 203-residue chain is Probable GTP-binding protein EngB (203 aa).

One can recognise an EngB-type G domain in the interval Met-1–Lys-190. Residues Gly-8–Ser-15, Gly-35–Lys-39, Asp-53–Gly-56, Asn-132–Asp-135, and Ile-169–Ala-171 each bind GTP. Mg(2+)-binding residues include Ser-15 and Thr-37.

The protein belongs to the TRAFAC class TrmE-Era-EngA-EngB-Septin-like GTPase superfamily. EngB GTPase family. Mg(2+) serves as cofactor.

Necessary for normal cell division and for the maintenance of normal septation. The protein is Probable GTP-binding protein EngB of Methanopyrus kandleri (strain AV19 / DSM 6324 / JCM 9639 / NBRC 100938).